We begin with the raw amino-acid sequence, 313 residues long: Pseudouridine-5'-phosphate glycosidase (313 aa).

The Proton donor role is filled by glutamate 26. Residues lysine 87 and alanine 107 each contribute to the substrate site. Mn(2+) is bound at residue aspartate 139. Position 141–143 (141–143) interacts with substrate; sequence SAD. Residue lysine 160 is the Nucleophile of the active site.

This sequence belongs to the pseudouridine-5'-phosphate glycosidase family. As to quaternary structure, homotrimer. Mn(2+) serves as cofactor.

The catalysed reaction is D-ribose 5-phosphate + uracil = psi-UMP + H2O. Functionally, catalyzes the reversible cleavage of pseudouridine 5'-phosphate (PsiMP) to ribose 5-phosphate and uracil. Functions biologically in the cleavage direction, as part of a pseudouridine degradation pathway. The polypeptide is Pseudouridine-5'-phosphate glycosidase (Corynebacterium aurimucosum (strain ATCC 700975 / DSM 44827 / CIP 107346 / CN-1) (Corynebacterium nigricans)).